Here is a 361-residue protein sequence, read N- to C-terminus: Plasmid recombination enzyme (361 aa).

DNA-binding residues include Y44 and Y114. Positions R331–L361 are disordered.

The protein belongs to the plasmid mobilization pre family.

Functionally, the interaction of the RSA site and the pre protein may not only serve a function in plasmid maintenance, but also contribute to the distribution of small antibiotic resistance plasmids among Gram-positive bacteria. In Lactiplantibacillus plantarum (Lactobacillus plantarum), this protein is Plasmid recombination enzyme (preA).